Consider the following 294-residue polypeptide: Foldase protein PrsA 1 (294 aa).

Positions 1–21 (MTKLKKVMISVIAATLLLLAG) are cleaved as a signal peptide. Cys22 carries N-palmitoyl cysteine lipidation. Cys22 carries the S-diacylglycerol cysteine lipid modification. The PpiC domain occupies 135-226 (EPDITVRHIL…YGYHLIQLVK (92 aa)).

The protein belongs to the PrsA family.

Its subcellular location is the cell membrane. The enzyme catalyses [protein]-peptidylproline (omega=180) = [protein]-peptidylproline (omega=0). In terms of biological role, plays a major role in protein secretion by helping the post-translocational extracellular folding of several secreted proteins. This is Foldase protein PrsA 1 (prsA1) from Listeria monocytogenes serovar 1/2a (strain ATCC BAA-679 / EGD-e).